The primary structure comprises 368 residues: Glutaminyl-peptide cyclotransferase (368 aa).

Positions 1-23 (MAGERRDSKAAAFFCLAWALCLA) are cleaved as a signal peptide. N-linked (GlcNAc...) asparagine glycosylation is present at Asn53. Cys143 and Cys169 are disulfide-bonded. A Zn(2+)-binding site is contributed by Asp164. The Proton acceptor role is filled by Glu207. Position 208 (Glu208) interacts with Zn(2+). The Proton acceptor role is filled by Asp254. The N-linked (GlcNAc...) asparagine glycan is linked to Asn292. His336 provides a ligand contact to Zn(2+). N-linked (GlcNAc...) asparagine glycosylation occurs at Asn352.

It belongs to the glutaminyl-peptide cyclotransferase family. Expressed by the venom gland.

It is found in the secreted. It carries out the reaction N-terminal L-glutaminyl-[peptide] = N-terminal 5-oxo-L-prolyl-[peptide] + NH4(+). Its function is as follows. Responsible for the biosynthesis of pyroglutamyl peptides. Has a bias against acidic and tryptophan residues adjacent to the N-terminal glutaminyl residue and a lack of importance of chain length after the second residue. Also catalyzes N-terminal pyroglutamate formation. The chain is Glutaminyl-peptide cyclotransferase (QPCT) from Boiga irregularis (Brown tree snake).